We begin with the raw amino-acid sequence, 341 residues long: Serpentine receptor class alpha-28 (341 aa).

The next 7 helical transmembrane spans lie at 25–45 (FIIS…RVLL), 57–77 (LLFS…VIRL), 107–129 (YYYT…LFSF), 142–162 (ASIV…YWVF), 188–208 (VNNI…FLYI), 242–262 (IVIF…SVFI), and 275–295 (LIIS…LIIL).

It belongs to the nematode receptor-like protein sra family.

It is found in the membrane. The sequence is that of Serpentine receptor class alpha-28 (sra-28) from Caenorhabditis elegans.